The primary structure comprises 67 residues: DNA-directed RNA polymerase subunit omega (67 aa).

It belongs to the RNA polymerase subunit omega family. The RNAP catalytic core consists of 2 alpha, 1 beta, 1 beta' and 1 omega subunit. When a sigma factor is associated with the core the holoenzyme is formed, which can initiate transcription.

It carries out the reaction RNA(n) + a ribonucleoside 5'-triphosphate = RNA(n+1) + diphosphate. Its function is as follows. Promotes RNA polymerase assembly. Latches the N- and C-terminal regions of the beta' subunit thereby facilitating its interaction with the beta and alpha subunits. In Acidovorax ebreus (strain TPSY) (Diaphorobacter sp. (strain TPSY)), this protein is DNA-directed RNA polymerase subunit omega.